The primary structure comprises 296 residues: Protoheme IX farnesyltransferase (296 aa).

Topologically, residues 1-9 (MMFKQYLQV) are cytoplasmic. Residues 10 to 28 (TKPGIIFGNLISVIGGFLL) form a helical membrane-spanning segment. The Periplasmic portion of the chain corresponds to 29–37 (ASKGSIDYP). The helical transmembrane segment at 38 to 56 (LFIYTLVGVSLVVASGCVF) threads the bilayer. Topologically, residues 57–78 (NNYIDRDIDRKMERTKNRVLVK) are cytoplasmic. The chain crosses the membrane as a helical span at residues 79-97 (GLISPGVSLVYATLLGIAG). The Periplasmic segment spans residues 98–107 (FMLLWFGANP). The helical transmembrane segment at 108–126 (LACWLGVMGFVVYVGVYSL) threads the bilayer. Residues 127-197 (YMKRHSVYGT…YQAANIPVLP (71 aa)) are Cytoplasmic-facing. Residues 198-216 (VVKGISVAKNHITLYIIAF) traverse the membrane as a helical segment. The Periplasmic segment spans residues 217–228 (AVATLMLTLGGY). A helical transmembrane segment spans residues 229-247 (AGYKYLVVAAAVSVWWLGM). Residues 248-268 (ALRGYKVEDDKVWARKLFGFS) lie on the Cytoplasmic side of the membrane. Residues 269–287 (IIAITALSIMMSVDFMVPN) traverse the membrane as a helical segment. Over 288–296 (SQNLLTYVW) the chain is Periplasmic.

This sequence belongs to the UbiA prenyltransferase family. Protoheme IX farnesyltransferase subfamily.

The protein localises to the cell inner membrane. It carries out the reaction heme b + (2E,6E)-farnesyl diphosphate + H2O = Fe(II)-heme o + diphosphate. Its pathway is porphyrin-containing compound metabolism; heme O biosynthesis; heme O from protoheme: step 1/1. In terms of biological role, converts heme B (protoheme IX) to heme O by substitution of the vinyl group on carbon 2 of heme B porphyrin ring with a hydroxyethyl farnesyl side group. This Salmonella typhimurium (strain LT2 / SGSC1412 / ATCC 700720) protein is Protoheme IX farnesyltransferase.